A 368-amino-acid chain; its full sequence is Alanine racemase (368 aa).

Lys-40 acts as the Proton acceptor; specific for D-alanine in catalysis. Lys-40 is modified (N6-(pyridoxal phosphate)lysine). Residue Arg-134 coordinates substrate. The active-site Proton acceptor; specific for L-alanine is Tyr-263. Residue Met-310 participates in substrate binding.

The protein belongs to the alanine racemase family. Pyridoxal 5'-phosphate serves as cofactor.

The catalysed reaction is L-alanine = D-alanine. The protein operates within amino-acid biosynthesis; D-alanine biosynthesis; D-alanine from L-alanine: step 1/1. In terms of biological role, catalyzes the interconversion of L-alanine and D-alanine. May also act on other amino acids. In Listeria monocytogenes serovar 1/2a (strain ATCC BAA-679 / EGD-e), this protein is Alanine racemase (alr).